Reading from the N-terminus, the 314-residue chain is Hydroxyacyl-coenzyme A dehydrogenase, mitochondrial (314 aa).

The transit peptide at 1–12 (MAFVTRQFLRSM) directs the protein to the mitochondrion. NAD(+) is bound by residues 34–39 (GGGLMG) and D57. Position 73 (S73) interacts with CoA. Residue K75 is modified to N6-acetyllysine. Position 80 (K80) interacts with CoA. At K80 the chain carries N6-succinyllysine. An N6-acetyllysine; alternate mark is found at K81 and K87. N6-succinyllysine; alternate is present on residues K81 and K87. E122 contacts NAD(+). Residue K125 is modified to N6-acetyllysine. Residue K127 participates in NAD(+) binding. K127 carries the post-translational modification N6-(2-hydroxyisobutyryl)lysine. The residue at position 136 (K136) is an N6-acetyllysine; alternate. K136 carries the N6-succinyllysine; alternate modification. 2 residues coordinate NAD(+): S149 and N173. A CoA-binding site is contributed by S149. K179 carries the post-translational modification N6-acetyllysine. 3 positions are modified to N6-acetyllysine; alternate: K185, K192, and K202. Residues K185, K192, and K202 each carry the N6-succinyllysine; alternate modification. Position 206 is an N6-succinyllysine (K206). K212 and K241 each carry N6-acetyllysine; alternate. Residues K212 and K241 each carry the N6-succinyllysine; alternate modification. Residue K305 participates in NAD(+) binding. Position 312 is an N6-acetyllysine; alternate (K312). K312 bears the N6-succinyllysine; alternate mark.

This sequence belongs to the 3-hydroxyacyl-CoA dehydrogenase family. In terms of assembly, homodimer. Interacts with GLUD1; this interaction inhibits the activation of glutamate dehydrogenase 1 (GLUD1). In terms of processing, succinylation at Lys-81, adjacent to a coenzyme A binding site. Desuccinylated by SIRT5. Expressed in liver, kidney, brain, and pancreatic islets.

The protein resides in the mitochondrion matrix. It is found in the nucleus. The protein localises to the cytoplasm. Its subcellular location is the cytosol. The enzyme catalyses a (3S)-3-hydroxyacyl-CoA + NAD(+) = a 3-oxoacyl-CoA + NADH + H(+). It catalyses the reaction (3S)-3-hydroxybutanoyl-CoA + NAD(+) = acetoacetyl-CoA + NADH + H(+). It carries out the reaction (3S)-hydroxydecanoyl-CoA + NAD(+) = 3-oxodecanoyl-CoA + NADH + H(+). The catalysed reaction is (3S)-hydroxyhexadecanoyl-CoA + NAD(+) = 3-oxohexadecanoyl-CoA + NADH + H(+). Its pathway is lipid metabolism; fatty acid beta-oxidation. Mitochondrial fatty acid beta-oxidation enzyme that catalyzes the third step of the beta-oxidation cycle for medium and short-chain 3-hydroxy fatty acyl-CoAs (C4 to C10). Plays a role in the control of insulin secretion by inhibiting the activation of glutamate dehydrogenase 1 (GLUD1), an enzyme that has an important role in regulating amino acid-induced insulin secretion. Plays a role in the maintenance of normal spermatogenesis through the reduction of fatty acid accumulation in the testes. Its function is as follows. Inhibits cell proliferation. This is Hydroxyacyl-coenzyme A dehydrogenase, mitochondrial (Hadh) from Mus musculus (Mouse).